The primary structure comprises 705 residues: MKSCKQLIVCSLAAILLLIPSVSFAADSNISVKLLNYIGNKSSISLSPTGFYKVTGDNVAVTDRFAGASRYETATLASNSQWKNPNTVILVNRDIFIDALPVIPLAKKLNAPVLFTQPDTLTKTTERQIAKFNPDNILIIGGARSISKDVENKLKSYGAVKRISGKNRYVLSENIAKQMGSYDKAIVVTGRVFQDALAIAPYAAAHGYPILLTEKDKLPDYDLPKQVIIIGSSFSVSDSVENQIKKTSTVQRIPGSTRYELTANIIKQLKLKADKVVMTNGTKYADVLIGASLASKKNSQILFVKQDSVPAAAKSITKDKATYAYDFIGSTSSISAEVENSLADEFYLADGGTYNLKINSGKLNLENIKTYGNSLRIKPENYSTSNRISLDGKQYLGTVNFSIESTKYIRPVNENIPFEDYLKGVIPNEMPASWSLEALKAQTVAARTYSITKTGTTVPDTTAFQVYGGYSWNSNTNKAVEQTKGKVLKYNGSLITAAYSSSNGGYTEASNEVWSSSVPYLIAKKDTKDPQIGWTLTLSKQQLDTKSLDLTKPSSWWSSATETDSARLSGVKNWILKNKETSADSVKIASIDDLSFSGTTQGQRAKTASMKVKYFVKSSTGSYNLSKITTISVPTSELRTMIGATVFKSTYVTVKKDTSKYTISGKGYGHGIGMSQYGAKARAEAGDSYSSILKFYYPGTTLTSY.

The signal sequence occupies residues 1-25; the sequence is MKSCKQLIVCSLAAILLLIPSVSFA. A run of 3 repeats spans residues 64-161, 162-251, and 252-349. The tract at residues 64 to 349 is 3 X tandem repeats; sequence RFAGASRYET…NSLADEFYLA (286 aa).

Its subcellular location is the cell membrane. It is found in the secreted. The protein resides in the cell wall. Possibly involved in cell wall metabolism during spore formation. Enhances the amidase activity approximately threefold. The polypeptide is Amidase enhancer (lytB) (Bacillus subtilis (strain 168)).